An 85-amino-acid chain; its full sequence is Large ribosomal subunit protein bL27 (85 aa).

The interval 1–22 (MAHKKAAGSTRNGRDSESKRLG) is disordered.

It belongs to the bacterial ribosomal protein bL27 family.

In Pseudoalteromonas translucida (strain TAC 125), this protein is Large ribosomal subunit protein bL27.